The following is an 891-amino-acid chain: MSGVNEIRSTFLDYFRDAGHAVVPSSSLVPKNDPTLMFTNAGMVQFKNVFTGVEKRPYVKATSSQKCVRAGGKHNDLDNVGYTARHHTFFEMLGNFSFGDYFKADAIELAWTLITKEFGLSPEKLLVTVYADDEEAAGLWRKIAGFSDEKIIRIGTSDNFWQMGDTGPCGPCSEIFIDQGPTLAGGPPGSPDEDGDRFLEFWNLVFMQYEQVEPGVRNSLPRPSIDTGMGLERMAAILQGVHSNYDTDLFRALIDAVAHAVSRAPEPSTRASYRVIADHLRSTSFLIADGVLPSNEGRGYVLRRIMRRAMRHLELLGARDPVMYRLVPTLVREMGQAFPELARSEALISETLRLEEGRFRKTLERGLAILDTETRDLAAGQNLSGETAFTLYDTYGFPLDLTQDALKARGIGVDTKAFDAAMLRQKQAARAAWQGSGEAATETVWFGIKERTGATEFLGYDTEAAEAVIGALLRDGAEVETLKAGENGIVVANQTPFYGESGGQVGDTGTISGPGLKARVTGTEKKLGDLFVHHVTVEEGTLAVGAAVELKVDHARRAAIRANHSATHLLHEALRQVLGDHVAQKGSLVAPERLRFDISHPKPIDEAELSRVEEIANAVLLQNAPVVTKLMAVDEAIESGARALFGEKYGDEVRVVSMGRPVDDEGREVEGRLPNFSIELCGGTHVSQLGEIGQITVLGESAVGAGVRRIEAMTGTAARRHRATESRTLSQLAGLLKAPVADVPERLSTLIEERRRLEKELADARKKIAMGGASGGGDEAREINGVKLMARVVEGVEMRDLKGLADEGKTRLGSGIVALVGVSADGKAGLVVGVTEDLTGRYDAVELVRAGAGHLGGKGGGGRRDMAQAGGPDGAGADAALAAIAEALAAG.

Residues His-564, His-568, Cys-681, and His-685 each contribute to the Zn(2+) site.

It belongs to the class-II aminoacyl-tRNA synthetase family. The cofactor is Zn(2+).

It localises to the cytoplasm. It carries out the reaction tRNA(Ala) + L-alanine + ATP = L-alanyl-tRNA(Ala) + AMP + diphosphate. Its function is as follows. Catalyzes the attachment of alanine to tRNA(Ala) in a two-step reaction: alanine is first activated by ATP to form Ala-AMP and then transferred to the acceptor end of tRNA(Ala). Also edits incorrectly charged Ser-tRNA(Ala) and Gly-tRNA(Ala) via its editing domain. The polypeptide is Alanine--tRNA ligase (Methylorubrum extorquens (strain PA1) (Methylobacterium extorquens)).